The following is a 656-amino-acid chain: UvrABC system protein B (656 aa).

A Helicase ATP-binding domain is found at Lys-29–Gln-414. Residue Gly-42–Thr-49 participates in ATP binding. Residues Tyr-95–Val-118 carry the Beta-hairpin motif. One can recognise a Helicase C-terminal domain in the interval Gln-434 to Leu-596. The UVR domain maps to Ala-614–Glu-649.

This sequence belongs to the UvrB family. Forms a heterotetramer with UvrA during the search for lesions. Interacts with UvrC in an incision complex.

It is found in the cytoplasm. In terms of biological role, the UvrABC repair system catalyzes the recognition and processing of DNA lesions. A damage recognition complex composed of 2 UvrA and 2 UvrB subunits scans DNA for abnormalities. Upon binding of the UvrA(2)B(2) complex to a putative damaged site, the DNA wraps around one UvrB monomer. DNA wrap is dependent on ATP binding by UvrB and probably causes local melting of the DNA helix, facilitating insertion of UvrB beta-hairpin between the DNA strands. Then UvrB probes one DNA strand for the presence of a lesion. If a lesion is found the UvrA subunits dissociate and the UvrB-DNA preincision complex is formed. This complex is subsequently bound by UvrC and the second UvrB is released. If no lesion is found, the DNA wraps around the other UvrB subunit that will check the other stand for damage. In Mycoplasma genitalium (strain ATCC 33530 / DSM 19775 / NCTC 10195 / G37) (Mycoplasmoides genitalium), this protein is UvrABC system protein B.